A 177-amino-acid chain; its full sequence is Cyclic pyranopterin monophosphate synthase 3 (177 aa).

Residues 79–81 (LCH) and 116–117 (ME) contribute to the substrate site. The active site involves aspartate 131. A disordered region spans residues 150 to 177 (KSGGRSGHYRRHDADVKPSDGGSTEDGC).

Belongs to the MoaC family. In terms of assembly, homohexamer; trimer of dimers.

The enzyme catalyses (8S)-3',8-cyclo-7,8-dihydroguanosine 5'-triphosphate = cyclic pyranopterin phosphate + diphosphate. It participates in cofactor biosynthesis; molybdopterin biosynthesis. Catalyzes the conversion of (8S)-3',8-cyclo-7,8-dihydroguanosine 5'-triphosphate to cyclic pyranopterin monophosphate (cPMP). The chain is Cyclic pyranopterin monophosphate synthase 3 (moaC3) from Mycobacterium bovis (strain ATCC BAA-935 / AF2122/97).